A 232-amino-acid polypeptide reads, in one-letter code: ATP synthase subunit a (232 aa).

Transmembrane regions (helical) follow at residues 18-38, 74-94, 107-127, 142-162, 173-193, and 195-215; these read LLFI…IAFI, WAGL…LGLF, TYSL…YLAF, ALIP…PIAL, GHLL…SLMV, and SIPI…VACI.

The protein belongs to the ATPase A chain family. As to quaternary structure, F-type ATPases have 2 components, CF(1) - the catalytic core - and CF(0) - the membrane proton channel. CF(1) has five subunits: alpha(3), beta(3), gamma(1), delta(1), epsilon(1). CF(0) has three main subunits: a, b and c.

The protein localises to the mitochondrion inner membrane. In terms of biological role, mitochondrial membrane ATP synthase (F(1)F(0) ATP synthase or Complex V) produces ATP from ADP in the presence of a proton gradient across the membrane which is generated by electron transport complexes of the respiratory chain. F-type ATPases consist of two structural domains, F(1) - containing the extramembraneous catalytic core and F(0) - containing the membrane proton channel, linked together by a central stalk and a peripheral stalk. During catalysis, ATP synthesis in the catalytic domain of F(1) is coupled via a rotary mechanism of the central stalk subunits to proton translocation. Key component of the proton channel; it may play a direct role in the translocation of protons across the membrane. This chain is ATP synthase subunit a (ATP6), found in Paracentrotus lividus (Common sea urchin).